A 605-amino-acid polypeptide reads, in one-letter code: Adenine deaminase (605 aa).

Belongs to the metallo-dependent hydrolases superfamily. Adenine deaminase family. Mn(2+) serves as cofactor.

The enzyme catalyses adenine + H2O + H(+) = hypoxanthine + NH4(+). The sequence is that of Adenine deaminase from Staphylothermus marinus (strain ATCC 43588 / DSM 3639 / JCM 9404 / F1).